Here is a 399-residue protein sequence, read N- to C-terminus: Stearoyl-[acyl-carrier-protein] 9-desaturase, seed specific, chloroplastic (399 aa).

A chloroplast-targeting transit peptide spans 1-34; that stretch reads MALKFNPLVSQPYKLASSARPPVSTFRSPKFLCL. Glu-141, Glu-179, His-182, Glu-232, Glu-265, and His-268 together coordinate Fe cation.

This sequence belongs to the fatty acid desaturase type 2 family. Homodimer. Requires Fe(2+) as cofactor. Developing seeds.

It localises to the plastid. It is found in the chloroplast. It carries out the reaction octadecanoyl-[ACP] + 2 reduced [2Fe-2S]-[ferredoxin] + O2 + 2 H(+) = (9Z)-octadecenoyl-[ACP] + 2 oxidized [2Fe-2S]-[ferredoxin] + 2 H2O. The protein operates within lipid metabolism; fatty acid metabolism. Functionally, converts stearoyl-ACP to oleoyl-ACP by introduction of a cis double bond between carbons Delta(9) and Delta(10) of the acyl chain. The sequence is that of Stearoyl-[acyl-carrier-protein] 9-desaturase, seed specific, chloroplastic from Brassica napus (Rape).